Reading from the N-terminus, the 120-residue chain is UPF0231 protein YacL (120 aa).

Belongs to the UPF0231 family.

This chain is UPF0231 protein YacL, found in Salmonella typhi.